A 180-amino-acid polypeptide reads, in one-letter code: Signal peptidase complex subunit 3 (180 aa).

Residues 1 to 11 (MNTVLSRANSL) are Cytoplasmic-facing. The chain crosses the membrane as a helical; Signal-anchor for type II membrane protein span at residues 12 to 32 (FAFSLSVMAALTFGCFITTAF). At 33–180 (KERSVPVSIA…PDTYETTKSY (148 aa)) the chain is on the lumenal side. Asn-141 carries N-linked (GlcNAc...) asparagine glycosylation.

Belongs to the SPCS3 family. In terms of assembly, component of the signal peptidase complex paralog A (SPC-A) composed of a catalytic subunit SEC11A and three accessory subunits SPCS1, SPCS2 and SPCS3. Component of the signal peptidase complex paralog C (SPC-C) composed of a catalytic subunit SEC11C and three accessory subunits SPCS1, SPCS2 and SPCS3. The complex induces a local thinning of the ER membrane which is used to measure the length of the signal peptide (SP) h-region of protein substrates. This ensures the selectivity of the complex towards h-regions shorter than 18-20 amino acids. Expressed in hen oviduct (at protein level).

It is found in the endoplasmic reticulum membrane. In terms of biological role, essential component of the signal peptidase complex (SPC) which catalyzes the cleavage of N-terminal signal sequences from nascent proteins as they are translocated into the lumen of the endoplasmic reticulum. Essential for the SPC catalytic activity, possibly by stabilizing and positioning the active center of the complex close to the lumenal surface. The chain is Signal peptidase complex subunit 3 from Gallus gallus (Chicken).